The chain runs to 879 residues: Leucine--tRNA ligase (879 aa).

The short motif at 46–56 (PYPSGALHMGH) is the 'HIGH' region element. A 'KMSKS' region motif is present at residues 638–642 (KMSKS). Lys-641 lines the ATP pocket.

This sequence belongs to the class-I aminoacyl-tRNA synthetase family.

It localises to the cytoplasm. The enzyme catalyses tRNA(Leu) + L-leucine + ATP = L-leucyl-tRNA(Leu) + AMP + diphosphate. The protein is Leucine--tRNA ligase of Xanthomonas campestris pv. campestris (strain 8004).